A 332-amino-acid polypeptide reads, in one-letter code: Glycerol-3-phosphate dehydrogenase [NAD(P)+] (332 aa).

NADPH-binding residues include Ser-11, Phe-12, Lys-32, and Lys-106. Sn-glycerol 3-phosphate is bound by residues Lys-106, Gly-137, and Ser-139. Ala-141 provides a ligand contact to NADPH. Sn-glycerol 3-phosphate is bound by residues Lys-192, Asp-245, Ser-255, Arg-256, and Asn-257. Lys-192 (proton acceptor) is an active-site residue. Residue Arg-256 coordinates NADPH. Residues Val-280 and Glu-282 each coordinate NADPH.

It belongs to the NAD-dependent glycerol-3-phosphate dehydrogenase family.

The protein resides in the cytoplasm. The catalysed reaction is sn-glycerol 3-phosphate + NAD(+) = dihydroxyacetone phosphate + NADH + H(+). It carries out the reaction sn-glycerol 3-phosphate + NADP(+) = dihydroxyacetone phosphate + NADPH + H(+). It participates in membrane lipid metabolism; glycerophospholipid metabolism. Functionally, catalyzes the reduction of the glycolytic intermediate dihydroxyacetone phosphate (DHAP) to sn-glycerol 3-phosphate (G3P), the key precursor for phospholipid synthesis. The sequence is that of Glycerol-3-phosphate dehydrogenase [NAD(P)+] from Staphylococcus carnosus (strain TM300).